The sequence spans 115 residues: Large ribosomal subunit protein bL20 (115 aa).

This sequence belongs to the bacterial ribosomal protein bL20 family.

Its function is as follows. Binds directly to 23S ribosomal RNA and is necessary for the in vitro assembly process of the 50S ribosomal subunit. It is not involved in the protein synthesizing functions of that subunit. This is Large ribosomal subunit protein bL20 from Synechococcus sp. (strain CC9605).